Here is an 89-residue protein sequence, read N- to C-terminus: Putative regulatory protein CPE1749 (89 aa).

It belongs to the RemA family.

This is Putative regulatory protein CPE1749 from Clostridium perfringens (strain 13 / Type A).